A 45-amino-acid polypeptide reads, in one-letter code: Non-specific lipid-transfer protein (45 aa).

This sequence belongs to the plant LTP family. As to expression, expressed in pollen.

In terms of biological role, plant non-specific lipid-transfer proteins transfer phospholipids as well as galactolipids across membranes. May play a role in wax or cutin deposition in the cell walls of expanding epidermal cells and certain secretory tissues. In Broussonetia papyrifera (Paper mulberry), this protein is Non-specific lipid-transfer protein.